The chain runs to 420 residues: Imidazolonepropionase (420 aa).

Residues H77 and H79 each coordinate Fe(3+). 2 residues coordinate Zn(2+): H77 and H79. The 4-imidazolone-5-propanoate site is built by R86, Y149, and H182. Residue Y149 participates in N-formimidoyl-L-glutamate binding. Position 245 (H245) interacts with Fe(3+). Zn(2+) is bound at residue H245. E248 contacts 4-imidazolone-5-propanoate. Residue D319 participates in Fe(3+) binding. Position 319 (D319) interacts with Zn(2+). Residue N321 coordinates N-formimidoyl-L-glutamate.

Belongs to the metallo-dependent hydrolases superfamily. HutI family. Zn(2+) is required as a cofactor. Fe(3+) serves as cofactor.

It is found in the cytoplasm. The catalysed reaction is 4-imidazolone-5-propanoate + H2O = N-formimidoyl-L-glutamate. It functions in the pathway amino-acid degradation; L-histidine degradation into L-glutamate; N-formimidoyl-L-glutamate from L-histidine: step 3/3. Its function is as follows. Catalyzes the hydrolytic cleavage of the carbon-nitrogen bond in imidazolone-5-propanoate to yield N-formimidoyl-L-glutamate. It is the third step in the universal histidine degradation pathway. The protein is Imidazolonepropionase of Haloarcula marismortui (strain ATCC 43049 / DSM 3752 / JCM 8966 / VKM B-1809) (Halobacterium marismortui).